We begin with the raw amino-acid sequence, 47 residues long: Packaging protein P22 (47 aa).

A helical membrane pass occupies residues 22–42; it reads TGWLAFVGLIIVAIILWQQII.

As to quaternary structure, heterodimer of P20 and P22; further multimerizes as hexamers of heterodimers. Part of the dodecameric portal complex that is composed of the packaging efficiency factor P6, the DNA packaging ATPase P9, and the internal heterododecamer P20/P22 which spans the virion inner membrane.

The protein resides in the virion membrane. Together with P22, forms the internal part of the portal complex embeded in the virion internal membrane and which plays critical roles in genome packaging and genome ejection. Both proteins multimerize as a single ring-shaped heterdodecamer arranged around a central channel and interact with the P6/P9 external part of the portal. The chain is Packaging protein P22 (XXII) from Enterobacteria phage PRD1 (Bacteriophage PRD1).